A 403-amino-acid polypeptide reads, in one-letter code: Tyrosine--tRNA ligase (403 aa).

The short motif at 42-51 is the 'HIGH' region element; sequence PTAPDLHLGH. Residues 226 to 230 carry the 'KMSKS' region motif; the sequence is KMSKS. An ATP-binding site is contributed by Lys-229. Positions 339–400 constitute an S4 RNA-binding domain; it reads LRIASLLTAA…GKRNFARVSL (62 aa).

Belongs to the class-I aminoacyl-tRNA synthetase family. TyrS type 2 subfamily. As to quaternary structure, homodimer.

The protein resides in the cytoplasm. It catalyses the reaction tRNA(Tyr) + L-tyrosine + ATP = L-tyrosyl-tRNA(Tyr) + AMP + diphosphate + H(+). Catalyzes the attachment of tyrosine to tRNA(Tyr) in a two-step reaction: tyrosine is first activated by ATP to form Tyr-AMP and then transferred to the acceptor end of tRNA(Tyr). The protein is Tyrosine--tRNA ligase of Xanthomonas oryzae pv. oryzae (strain MAFF 311018).